The following is a 170-amino-acid chain: Photosystem I assembly protein Ycf3 (170 aa).

TPR repeat units lie at residues 35-68 (AFCY…EEDP), 72-105 (SYII…NPRL), and 120-153 (GLKA…APNN).

Belongs to the Ycf3 family.

It localises to the plastid. The protein resides in the chloroplast thylakoid membrane. Essential for the assembly of the photosystem I (PSI) complex. May act as a chaperone-like factor to guide the assembly of the PSI subunits. The protein is Photosystem I assembly protein Ycf3 of Gracilaria tenuistipitata var. liui (Red alga).